A 49-amino-acid polypeptide reads, in one-letter code: Agglutinin-1 (49 aa).

In terms of assembly, homooligomer. Post-translationally, glycosylated.

Functionally, beta-galactoside specific lectin. Has a hemagglutinating activity on erythrocytes. The chain is Agglutinin-1 from Pomacea flagellata (Apple snail).